The primary structure comprises 388 residues: LL-diaminopimelate aminotransferase (388 aa).

Residues Tyr16 and Gly41 each contribute to the substrate site. Pyridoxal 5'-phosphate is bound by residues Tyr70, 104–105 (SK), Tyr129, Asn179, Tyr210, and 239–241 (SLS). Substrate is bound by residues Lys105, Tyr129, and Asn179. Lys242 is subject to N6-(pyridoxal phosphate)lysine. Arg250 provides a ligand contact to pyridoxal 5'-phosphate. Arg368 contributes to the substrate binding site.

The protein belongs to the class-I pyridoxal-phosphate-dependent aminotransferase family. LL-diaminopimelate aminotransferase subfamily. In terms of assembly, homodimer. Pyridoxal 5'-phosphate is required as a cofactor.

It carries out the reaction (2S,6S)-2,6-diaminopimelate + 2-oxoglutarate = (S)-2,3,4,5-tetrahydrodipicolinate + L-glutamate + H2O + H(+). Its pathway is amino-acid biosynthesis; L-lysine biosynthesis via DAP pathway; LL-2,6-diaminopimelate from (S)-tetrahydrodipicolinate (aminotransferase route): step 1/1. Functionally, involved in the synthesis of meso-diaminopimelate (m-DAP or DL-DAP), required for both lysine and peptidoglycan biosynthesis. Catalyzes the direct conversion of tetrahydrodipicolinate to LL-diaminopimelate. This chain is LL-diaminopimelate aminotransferase, found in Maridesulfovibrio salexigens (strain ATCC 14822 / DSM 2638 / NCIMB 8403 / VKM B-1763) (Desulfovibrio salexigens).